A 725-amino-acid chain; its full sequence is Malate synthase G 2 (725 aa).

Residues Val-118, 125–126, Ser-276, and Arg-313 contribute to the acetyl-CoA site; that span reads RY. Catalysis depends on Arg-340, which acts as the Proton acceptor. Residues Arg-340, Glu-429, and 454-457 each bind glyoxylate; that span reads GFLD. Residues Glu-429 and Asp-457 each coordinate Mg(2+). Pro-538 provides a ligand contact to acetyl-CoA. Cysteine sulfenic acid (-SOH) is present on Cys-619. Asp-633 serves as the catalytic Proton donor.

It belongs to the malate synthase family. GlcB subfamily. As to quaternary structure, monomer. Requires Mg(2+) as cofactor.

It is found in the cytoplasm. It carries out the reaction glyoxylate + acetyl-CoA + H2O = (S)-malate + CoA + H(+). It functions in the pathway carbohydrate metabolism; glyoxylate cycle; (S)-malate from isocitrate: step 2/2. In terms of biological role, involved in the glycolate utilization. Catalyzes the condensation and subsequent hydrolysis of acetyl-coenzyme A (acetyl-CoA) and glyoxylate to form malate and CoA. The chain is Malate synthase G 2 from Pseudomonas syringae pv. tomato (strain ATCC BAA-871 / DC3000).